Reading from the N-terminus, the 370-residue chain is Gibberellin 3-beta-dioxygenase 2-1 (370 aa).

Positions 205 to 306 constitute a Fe2OG dioxygenase domain; it reads MTATMHLNWY…RISLGYFLGP (102 aa). 3 residues coordinate Fe cation: His229, Asp231, and His287. Residue Arg297 is part of the active site.

This sequence belongs to the iron/ascorbate-dependent oxidoreductase family. GA3OX subfamily. The cofactor is L-ascorbate. Fe cation is required as a cofactor. In terms of tissue distribution, expressed in internodes, nodes and the ear of the elongating stem.

It catalyses the reaction gibberellin A20 + 2-oxoglutarate + O2 = gibberellin A1 + succinate + CO2. In terms of biological role, converts the inactive gibberellin precursors GA9 and GA20 in the bioactives gibberellins GA4 and GA1. Also accepts GA15, GA44, the 2,3-unsaturated GA5 and 2,3-dihydroGA9 as substrate. No activity with GA12, GA53, GA24, GA19 and GA25. Also possesses 2-beta-hydroxylase, 2,3-desaturase, 2,3-epoxidase and 13-hydroxylase activities. The polypeptide is Gibberellin 3-beta-dioxygenase 2-1 (GA3ox2-1) (Triticum aestivum (Wheat)).